The chain runs to 913 residues: Chitin synthase 1 (913 aa).

The tract at residues 1–27 (MSGAPPPSSGFAPRSYGQQPLSHAPRS) is disordered. UDP-N-acetyl-alpha-D-glucosamine is bound by residues Thr-237, Glu-241, and Asp-291. Asn-420 carries N-linked (GlcNAc...) asparagine glycosylation. Residue Asp-496 is part of the active site. Residue Asn-510 is glycosylated (N-linked (GlcNAc...) asparagine). 6 consecutive transmembrane segments (helical) span residues 539–559 (WLNG…RIYS), 581–601 (YTAF…FIVF), 625–645 (AVYI…IIGL), 658–678 (FVGA…AGIF), 684–704 (TVHS…ASAL), and 711–731 (IFMT…IFTI). Positions 741-743 (SWG) match the Conserved SWG motif motif. A run of 2 helical transmembrane segments spans residues 800-820 (VLLT…YFAS) and 825-845 (MPVL…GSIG). N-linked (GlcNAc...) asparagine glycans are attached at residues Asn-867 and Asn-900.

The protein belongs to the chitin synthase family. Class II subfamily. Homodimer. It depends on Mn(2+) as a cofactor.

It is found in the cell membrane. The enzyme catalyses [(1-&gt;4)-N-acetyl-beta-D-glucosaminyl](n) + UDP-N-acetyl-alpha-D-glucosamine = [(1-&gt;4)-N-acetyl-beta-D-glucosaminyl](n+1) + UDP + H(+). Its activity is regulated as follows. The activity is inhibited by nikkomycin Z (NikZ). Polymerizes chitin, a structural polymer of the cell wall and septum, by transferring the sugar moiety of UDP-GlcNAc to the non-reducing end of the growing chitin polymer. Involved in mycelial growth, sporangial production, zoospore release and pathogenesis. The chain is Chitin synthase 1 from Phytophthora sojae (strain P6497) (Soybean stem and root rot agent).